The sequence spans 528 residues: MSFVFAVPEMVAATASDLASLGAALSEATAAAAIPTTQVLAAAADEVSAAIAELFGAHGQEFQALSAQASAFHDRFVRALSAAAGWYVDAEAANAALVDTAATGASELGSGGRTALILGSTGTPRPPFDYMQQVYDRYIAPHYLGYAFSGLYTPAQFQPWTGIPSLTYDQSVAEGAGYLHTAIMQQVAAGNDVVVLGFSQGASVATLEMRHLASLPAGVAPSPDQLSFVLLGNPNNPNGGILARFPGLYLQSLGLTFNGATPDTDYATTIYTTQYDGFADFPKYPLNILADVNALLGIYYSHSLYYGLTPEQVASGIVLPVSSPDTNTTYILLPNEDLPLLQPLRGIVPEPLLDLIEPDLRAIIELGYDRTGYADVPTPAALFPVHIDPIAVPPQIGAAIGGPLTALDGLLDTVINDQLNPVVTSGIYQAGAELSVAAAGYGAPAGVTNAIFIGQQVLPILVEGPGALVTADTHYLVDAIQDLAAGDLSGFNQNLQLIPATNIALLVFAAGIPAVAAVAILTGQDFPV.

The PE domain occupies Met-1–Ala-93. The interval Asn-94–Tyr-143 is linker. Residues Ser-149–Asp-369 enclose the PE-PPE domain. Residue Ser-199 is part of the active site. A helical transmembrane segment spans residues Ile-503–Gly-523.

The protein belongs to the mycobacterial PE family.

It localises to the membrane. It catalyses the reaction a hexanoate ester + H2O = an aliphatic alcohol + hexanoate + H(+). The catalysed reaction is an octanoate ester + H2O = an aliphatic alcohol + octanoate + H(+). The enzyme catalyses a butanoate ester + H2O = an aliphatic alcohol + butanoate + H(+). Its activity is regulated as follows. Esterase activity is significantly inhibited by the serine modifier phenylmethylsulfonyl fluoride (PMSF). Esterase that hydrolyzes short to medium chain fatty acid esters with the highest specific activity for p-nitrophenyl caproate (pNPC6). Has lower activity with p-nitrophenyl caprylate (pNPC8) and p-nitrophenyl butyrate (pNPC4). Has weak activity with p-nitrophenyl caprate (pNPC10) and p-nitrophenyl laurate (pNPC12). Does not possess lipolytic activity and cutinase activity. The sequence is that of Esterase PE16 from Mycobacterium tuberculosis (strain ATCC 25618 / H37Rv).